Consider the following 31-residue polypeptide: U14-ctenitoxin-Co1c (31 aa).

In terms of tissue distribution, expressed by the venom gland.

The protein localises to the secreted. Functionally, not toxic to mice by intracerebroventricular injection. This Ctenus ornatus (Brazilian spider) protein is U14-ctenitoxin-Co1c.